A 297-amino-acid polypeptide reads, in one-letter code: Protein COFACTOR ASSEMBLY OF COMPLEX C SUBUNIT B CCB4, chloroplastic (297 aa).

A chloroplast-targeting transit peptide spans 1–33; that stretch reads MEARIILLRIQIPWSANRQFSHPPLDFPRFIRA. Residues 34-70 lie on the Stromal side of the membrane; that stretch reads SSSSTSQKPKTYEGPKPRKNLVADFISKNDDLVRSLP. A helical membrane pass occupies residues 71 to 91; the sequence is IYVGGASLLAVLFNRTVSGIA. Over 92-103 the chain is Lumenal; the sequence is PVADASSSQSRA. The chain crosses the membrane as a helical span at residues 104–124; sequence DLLALGLAVTNLLTGLVWLSI. Over 125-297 the chain is Stromal; the sequence is RPKSITPVNP…DSDEISRVTV (173 aa).

The protein localises to the plastid. It is found in the chloroplast thylakoid membrane. In terms of biological role, required for the biogenesis and accumulation of native cytochrome b6 in the thylakoid membrane. Controls the conversion of apocytochrome b6 to holocytochrome b6. Required for covalent binding of the c-type heme to cytochrome b6. The protein is Protein COFACTOR ASSEMBLY OF COMPLEX C SUBUNIT B CCB4, chloroplastic of Arabidopsis thaliana (Mouse-ear cress).